The following is a 103-amino-acid chain: MYAVFQSGGKQHRVSEGQTIRLEKLDIATGEAVEFDQVLMIANGEEINIGAPLVVGGVVKAEVVAHGRGEKIKIVKFRRRKHYRKQQGHRQWFTDVKITGISA.

It belongs to the bacterial ribosomal protein bL21 family. In terms of assembly, part of the 50S ribosomal subunit. Contacts protein L20.

Its function is as follows. This protein binds to 23S rRNA in the presence of protein L20. This chain is Large ribosomal subunit protein bL21, found in Yersinia enterocolitica serotype O:8 / biotype 1B (strain NCTC 13174 / 8081).